Consider the following 216-residue polypeptide: Surface presentation of antigens protein SpaP (216 aa).

The next 4 helical transmembrane spans lie at 8-28 (IATL…TCYI), 52-72 (LNGI…EAGY), 153-173 (IGFY…SILL), and 183-203 (ITIS…WGIL).

The protein belongs to the FliP/MopC/SpaP family.

The protein localises to the cell membrane. In terms of biological role, required for surface presentation of invasion plasmid antigens. Could play a role in preserving the translocation competence of the ipa antigens. Required for invasion and for secretion of the three Ipa proteins. This is Surface presentation of antigens protein SpaP (spaP) from Shigella flexneri.